Here is a 542-residue protein sequence, read N- to C-terminus: Phosphoacetylglucosamine mutase (542 aa).

M1 is modified (N-acetylmethionine). Residue T62 is modified to Phosphothreonine. S64 acts as the Phosphoserine intermediate in catalysis. 4 residues coordinate Mg(2+): S64, D276, D278, and D280. Residue S64 is modified to Phosphoserine. Substrate-binding positions include E370–N372, R496–T500, and R505.

The protein belongs to the phosphohexose mutase family. Requires Mg(2+) as cofactor.

The enzyme catalyses N-acetyl-alpha-D-glucosamine 1-phosphate = N-acetyl-D-glucosamine 6-phosphate. Its pathway is nucleotide-sugar biosynthesis; UDP-N-acetyl-alpha-D-glucosamine biosynthesis; N-acetyl-alpha-D-glucosamine 1-phosphate from alpha-D-glucosamine 6-phosphate (route I): step 2/2. With respect to regulation, inhibited by Mn(2+), Cd(2+), Zn(2+), Cu(2+) and Be(2+). Its function is as follows. Catalyzes the conversion of GlcNAc-6-P into GlcNAc-1-P during the synthesis of uridine diphosphate/UDP-GlcNAc, a sugar nucleotide critical to multiple glycosylation pathways including protein N- and O-glycosylation. This Sus scrofa (Pig) protein is Phosphoacetylglucosamine mutase.